A 62-amino-acid chain; its full sequence is UPF0434 protein Fphi_1862 (62 aa).

The protein belongs to the UPF0434 family.

The protein is UPF0434 protein Fphi_1862 of Francisella philomiragia subsp. philomiragia (strain ATCC 25017 / CCUG 19701 / FSC 153 / O#319-036).